Here is a 407-residue protein sequence, read N- to C-terminus: Imidazolonepropionase (407 aa).

The Fe(3+) site is built by H74 and H76. Zn(2+)-binding residues include H74 and H76. R83, Y146, and H179 together coordinate 4-imidazolone-5-propanoate. Y146 serves as a coordination point for N-formimidoyl-L-glutamate. Residue H244 coordinates Fe(3+). Residue H244 participates in Zn(2+) binding. Q247 contributes to the 4-imidazolone-5-propanoate binding site. Residue D319 coordinates Fe(3+). Residue D319 participates in Zn(2+) binding. The N-formimidoyl-L-glutamate site is built by N321 and G323. T324 provides a ligand contact to 4-imidazolone-5-propanoate.

This sequence belongs to the metallo-dependent hydrolases superfamily. HutI family. Zn(2+) is required as a cofactor. Requires Fe(3+) as cofactor.

It localises to the cytoplasm. The catalysed reaction is 4-imidazolone-5-propanoate + H2O = N-formimidoyl-L-glutamate. The protein operates within amino-acid degradation; L-histidine degradation into L-glutamate; N-formimidoyl-L-glutamate from L-histidine: step 3/3. Its function is as follows. Catalyzes the hydrolytic cleavage of the carbon-nitrogen bond in imidazolone-5-propanoate to yield N-formimidoyl-L-glutamate. It is the third step in the universal histidine degradation pathway. This Salmonella typhi protein is Imidazolonepropionase.